Here is a 191-residue protein sequence, read N- to C-terminus: Putative RNA-binding protein EEED8.4 (191 aa).

The region spanning 55–132 (KSVFIGNVDF…RPIVVTAKRT (78 aa)) is the RRM domain. Positions 136 to 160 (GMGHGVRGSSRGTFGRGRGAARGAP) are disordered.

The protein is Putative RNA-binding protein EEED8.4 of Caenorhabditis elegans.